Reading from the N-terminus, the 444-residue chain is sn-glycerol-3-phosphate-binding periplasmic protein UgpB (444 aa).

The N-terminal stretch at 1-30 is a signal peptide; sequence MFNNTIRKTHAIRTAAACVAFALMSAGAQA. Sn-glycerol 3-phosphate-binding residues include tyrosine 72, glutamate 96, serine 151, serine 277, glycine 314, tyrosine 353, and arginine 404.

It belongs to the bacterial solute-binding protein 1 family. The complex is composed of two ATP-binding proteins (UgpC), two transmembrane proteins (UgpA and UgpE) and a solute-binding protein (UgpB).

It is found in the periplasm. In terms of biological role, part of the ABC transporter complex UgpBAEC involved in sn-glycerol-3-phosphate (G3P) import. Binds G3P. The polypeptide is sn-glycerol-3-phosphate-binding periplasmic protein UgpB (ugpB) (Pectobacterium atrosepticum (strain SCRI 1043 / ATCC BAA-672) (Erwinia carotovora subsp. atroseptica)).